The chain runs to 178 residues: Adenine phosphoribosyltransferase (178 aa).

Belongs to the purine/pyrimidine phosphoribosyltransferase family. In terms of assembly, homodimer.

The protein resides in the cytoplasm. The enzyme catalyses AMP + diphosphate = 5-phospho-alpha-D-ribose 1-diphosphate + adenine. It functions in the pathway purine metabolism; AMP biosynthesis via salvage pathway; AMP from adenine: step 1/1. Its function is as follows. Catalyzes a salvage reaction resulting in the formation of AMP, that is energically less costly than de novo synthesis. This chain is Adenine phosphoribosyltransferase, found in Cereibacter sphaeroides (strain ATCC 17029 / ATH 2.4.9) (Rhodobacter sphaeroides).